The primary structure comprises 126 residues: Large ribosomal subunit protein bL12 (126 aa).

Belongs to the bacterial ribosomal protein bL12 family. In terms of assembly, homodimer. Part of the ribosomal stalk of the 50S ribosomal subunit. Forms a multimeric L10(L12)X complex, where L10 forms an elongated spine to which 2 to 4 L12 dimers bind in a sequential fashion. Binds GTP-bound translation factors.

Forms part of the ribosomal stalk which helps the ribosome interact with GTP-bound translation factors. Is thus essential for accurate translation. This chain is Large ribosomal subunit protein bL12, found in Bordetella petrii (strain ATCC BAA-461 / DSM 12804 / CCUG 43448).